The primary structure comprises 130 residues: MSMQDPIADMLTRIRNGQFASKISVIMPSSKLKVKISILLKEEGYIKDFSVNSTNKPILEIFLKYFRSKPVIENITRVSSPSLRIYARNNKLPQVMSGLGIVIISTSQGVLTDQVARKKGLGGEIICNVS.

It belongs to the universal ribosomal protein uS8 family. In terms of assembly, part of the 30S ribosomal subunit. Contacts proteins S5 and S12.

In terms of biological role, one of the primary rRNA binding proteins, it binds directly to 16S rRNA central domain where it helps coordinate assembly of the platform of the 30S subunit. This Buchnera aphidicola subsp. Baizongia pistaciae (strain Bp) protein is Small ribosomal subunit protein uS8.